Consider the following 154-residue polypeptide: SsrA-binding protein (154 aa).

This sequence belongs to the SmpB family.

The protein resides in the cytoplasm. Its function is as follows. Required for rescue of stalled ribosomes mediated by trans-translation. Binds to transfer-messenger RNA (tmRNA), required for stable association of tmRNA with ribosomes. tmRNA and SmpB together mimic tRNA shape, replacing the anticodon stem-loop with SmpB. tmRNA is encoded by the ssrA gene; the 2 termini fold to resemble tRNA(Ala) and it encodes a 'tag peptide', a short internal open reading frame. During trans-translation Ala-aminoacylated tmRNA acts like a tRNA, entering the A-site of stalled ribosomes, displacing the stalled mRNA. The ribosome then switches to translate the ORF on the tmRNA; the nascent peptide is terminated with the 'tag peptide' encoded by the tmRNA and targeted for degradation. The ribosome is freed to recommence translation, which seems to be the essential function of trans-translation. This chain is SsrA-binding protein, found in Synechocystis sp. (strain ATCC 27184 / PCC 6803 / Kazusa).